Reading from the N-terminus, the 212-residue chain is Phosphatidylserine decarboxylase proenzyme (212 aa).

The active-site Schiff-base intermediate with substrate; via pyruvic acid is the Ser-182. Ser-182 bears the Pyruvic acid (Ser); by autocatalysis mark.

The protein belongs to the phosphatidylserine decarboxylase family. PSD-A subfamily. In terms of assembly, heterodimer of a large membrane-associated beta subunit and a small pyruvoyl-containing alpha subunit. It depends on pyruvate as a cofactor. Post-translationally, is synthesized initially as an inactive proenzyme. Formation of the active enzyme involves a self-maturation process in which the active site pyruvoyl group is generated from an internal serine residue via an autocatalytic post-translational modification. Two non-identical subunits are generated from the proenzyme in this reaction, and the pyruvate is formed at the N-terminus of the alpha chain, which is derived from the carboxyl end of the proenzyme. The post-translation cleavage follows an unusual pathway, termed non-hydrolytic serinolysis, in which the side chain hydroxyl group of the serine supplies its oxygen atom to form the C-terminus of the beta chain, while the remainder of the serine residue undergoes an oxidative deamination to produce ammonia and the pyruvoyl prosthetic group on the alpha chain.

Its subcellular location is the cell membrane. The enzyme catalyses a 1,2-diacyl-sn-glycero-3-phospho-L-serine + H(+) = a 1,2-diacyl-sn-glycero-3-phosphoethanolamine + CO2. The protein operates within phospholipid metabolism; phosphatidylethanolamine biosynthesis; phosphatidylethanolamine from CDP-diacylglycerol: step 2/2. In terms of biological role, catalyzes the formation of phosphatidylethanolamine (PtdEtn) from phosphatidylserine (PtdSer). The chain is Phosphatidylserine decarboxylase proenzyme from Paraburkholderia phymatum (strain DSM 17167 / CIP 108236 / LMG 21445 / STM815) (Burkholderia phymatum).